The chain runs to 398 residues: ATP-dependent RNA helicase eIF4A (398 aa).

Residues 25 to 53 (DSFDSMELKPELLRGVYAYGFERPSAIQQ) carry the Q motif motif. Residues 56 to 226 (ILPIVKGNDV…TKFMRDPVRI (171 aa)) form the Helicase ATP-binding domain. An ATP-binding site is contributed by 69-76 (AQSGTGKT). The DEAD box signature appears at 174–177 (DEAD). The region spanning 237–398 (GIKQFYIAVE…EMPMNVADLI (162 aa)) is the Helicase C-terminal domain.

The protein belongs to the DEAD box helicase family. eIF4A subfamily. Component of the eIF4F complex, which composition varies with external and internal environmental conditions. It is composed of at least eIF4A, eIF4E and eIF4G.

The protein resides in the cytoplasm. It carries out the reaction ATP + H2O = ADP + phosphate + H(+). Functionally, ATP-dependent RNA helicase which is a subunit of the eIF4F complex involved in cap recognition and is required for mRNA binding to ribosome. In the current model of translation initiation, eIF4A unwinds RNA secondary structures in the 5'-UTR of mRNAs which is necessary to allow efficient binding of the small ribosomal subunit, and subsequent scanning for the initiator codon. The sequence is that of ATP-dependent RNA helicase eIF4A (tif1) from Emericella nidulans (strain FGSC A4 / ATCC 38163 / CBS 112.46 / NRRL 194 / M139) (Aspergillus nidulans).